A 598-amino-acid polypeptide reads, in one-letter code: Elongation factor 4 (598 aa).

In terms of domain architecture, tr-type G spans 4-185 (KNIRNFSIIA…TIIAKIPPPK (182 aa)). Residues 16–21 (DHGKST) and 132–135 (NKID) each bind GTP.

It belongs to the TRAFAC class translation factor GTPase superfamily. Classic translation factor GTPase family. LepA subfamily.

The protein resides in the cell membrane. It carries out the reaction GTP + H2O = GDP + phosphate + H(+). Its function is as follows. Required for accurate and efficient protein synthesis under certain stress conditions. May act as a fidelity factor of the translation reaction, by catalyzing a one-codon backward translocation of tRNAs on improperly translocated ribosomes. Back-translocation proceeds from a post-translocation (POST) complex to a pre-translocation (PRE) complex, thus giving elongation factor G a second chance to translocate the tRNAs correctly. Binds to ribosomes in a GTP-dependent manner. The polypeptide is Elongation factor 4 (Mycoplasma genitalium (strain ATCC 33530 / DSM 19775 / NCTC 10195 / G37) (Mycoplasmoides genitalium)).